We begin with the raw amino-acid sequence, 421 residues long: Glucan 1,3-beta-glucosidase (421 aa).

An N-terminal signal peptide occupies residues 1 to 15 (MKLTKLVALAGAALA). Catalysis depends on glutamate 213, which acts as the Proton donor. Cystine bridges form between cysteine 296–cysteine 419 and cysteine 321–cysteine 347. The Nucleophile role is filled by glutamate 313.

Belongs to the glycosyl hydrolase 5 (cellulase A) family.

The protein localises to the secreted. The catalysed reaction is Successive hydrolysis of beta-D-glucose units from the non-reducing ends of (1-&gt;3)-beta-D-glucans, releasing alpha-glucose.. The chain is Glucan 1,3-beta-glucosidase (EXG1) from Yarrowia lipolytica (strain CLIB 122 / E 150) (Yeast).